A 240-amino-acid chain; its full sequence is Keratinocyte-associated protein 3 (240 aa).

The next 4 helical transmembrane spans lie at 21-41, 63-83, 95-115, and 163-183; these read VGLA…VLHG, VISV…LLAS, LLTL…GLLL, and ALAL…LSGY.

It belongs to the TMEM54 family.

Its subcellular location is the membrane. The sequence is that of Keratinocyte-associated protein 3 (Krtcap3) from Mus musculus (Mouse).